Reading from the N-terminus, the 294-residue chain is Undecaprenyl-diphosphatase (294 aa).

The next 6 helical transmembrane spans lie at 39 to 59, 93 to 113, 123 to 143, 198 to 218, 232 to 252, and 268 to 288; these read PGAA…ILYF, ATLG…GFTL, NLWI…MVDA, SFLM…IKAV, PTLV…IGFL, and IGLA…AIDP.

This sequence belongs to the UppP family.

It is found in the cell membrane. The enzyme catalyses di-trans,octa-cis-undecaprenyl diphosphate + H2O = di-trans,octa-cis-undecaprenyl phosphate + phosphate + H(+). Functionally, catalyzes the dephosphorylation of undecaprenyl diphosphate (UPP). Confers resistance to bacitracin. This chain is Undecaprenyl-diphosphatase, found in Bifidobacterium longum (strain DJO10A).